We begin with the raw amino-acid sequence, 151 residues long: RNA polymerase-binding transcription factor DksA (151 aa).

Positions 114, 117, 135, and 138 each coordinate Zn(2+). The dksA C4-type zinc finger occupies 114 to 138 (CNSCSVEIGIRRLEARPTADLCIDC).

It belongs to the DksA family. In terms of assembly, interacts directly with the RNA polymerase.

The protein localises to the cytoplasm. Its function is as follows. Transcription factor that acts by binding directly to the RNA polymerase (RNAP). Required for negative regulation of rRNA expression and positive regulation of several amino acid biosynthesis promoters. Also required for regulation of fis expression. This Buchnera aphidicola subsp. Acyrthosiphon pisum (strain APS) (Acyrthosiphon pisum symbiotic bacterium) protein is RNA polymerase-binding transcription factor DksA.